A 158-amino-acid polypeptide reads, in one-letter code: Peroxidase (158 aa).

Pro2 contacts substrate. Position 32 (His32) interacts with heme b. A Ca(2+)-binding site is contributed by Thr33. Cys39 and Cys64 are joined by a disulfide. Asn48 is a glycosylation site (N-linked (GlcNAc...) asparagine). The Ca(2+) site is built by Asp78, Thr81, and Asp86.

This sequence belongs to the peroxidase family. Classical plant (class III) peroxidase subfamily. Ca(2+) serves as cofactor. It depends on heme b as a cofactor.

The catalysed reaction is 2 a phenolic donor + H2O2 = 2 a phenolic radical donor + 2 H2O. In terms of biological role, removal of H(2)O(2), oxidation of toxic reductants, biosynthesis and degradation of lignin, suberization, auxin catabolism, response to environmental stresses such as wounding, pathogen attack and oxidative stress. These functions might be dependent on each isozyme/isoform in each plant tissue. This Lupinus polyphyllus (Large-leaved lupine) protein is Peroxidase.